Here is a 276-residue protein sequence, read N- to C-terminus: Large ribosomal subunit protein uL2 (276 aa).

The tract at residues V224–D265 is disordered.

Belongs to the universal ribosomal protein uL2 family. Part of the 50S ribosomal subunit. Forms a bridge to the 30S subunit in the 70S ribosome.

Its function is as follows. One of the primary rRNA binding proteins. Required for association of the 30S and 50S subunits to form the 70S ribosome, for tRNA binding and peptide bond formation. It has been suggested to have peptidyltransferase activity; this is somewhat controversial. Makes several contacts with the 16S rRNA in the 70S ribosome. This chain is Large ribosomal subunit protein uL2, found in Dichelobacter nodosus (strain VCS1703A).